The chain runs to 979 residues: Translation initiation factor IF-2 (979 aa).

Residues 68–386 (VKQKQGTPAS…DKRDAASRAA (319 aa)) form a disordered region. 3 stretches are compositionally biased toward basic and acidic residues: residues 102 to 179 (QDMR…KPEE), 217 to 229 (EMEK…EVFR), and 260 to 273 (TKED…DADG). Positions 317–326 (RPAQQQSNAS) are enriched in polar residues. The span at 347 to 356 (DVQRQVKETL) shows a compositional bias: basic and acidic residues. A tr-type G domain is found at 478-646 (ARPPIVTVMG…KVLLEADILE (169 aa)). The tract at residues 487 to 494 (GHVDHGKT) is G1. 487-494 (GHVDHGKT) lines the GTP pocket. The segment at 512–516 (GITQH) is G2. The segment at 534–537 (DTPG) is G3. GTP-binding positions include 534–538 (DTPGH) and 588–591 (NKID). Residues 588–591 (NKID) form a G4 region. The interval 624–626 (SAK) is G5.

This sequence belongs to the TRAFAC class translation factor GTPase superfamily. Classic translation factor GTPase family. IF-2 subfamily.

The protein resides in the cytoplasm. Functionally, one of the essential components for the initiation of protein synthesis. Protects formylmethionyl-tRNA from spontaneous hydrolysis and promotes its binding to the 30S ribosomal subunits. Also involved in the hydrolysis of GTP during the formation of the 70S ribosomal complex. The sequence is that of Translation initiation factor IF-2 from Porphyromonas gingivalis (strain ATCC BAA-308 / W83).